The following is a 363-amino-acid chain: Small ribosomal subunit biogenesis GTPase RsgA (363 aa).

In terms of domain architecture, CP-type G spans 112 to 268 (HQQVIAANID…LIDTPGMREL (157 aa)). GTP-binding positions include 157 to 160 (TKAD) and 210 to 218 (GSSGAGKST). The Zn(2+) site is built by Cys-291, Cys-296, His-298, and Cys-304. Positions 340-363 (RVAQNNRGKGSGKRPASVDRPGRH) are disordered.

This sequence belongs to the TRAFAC class YlqF/YawG GTPase family. RsgA subfamily. In terms of assembly, monomer. Associates with 30S ribosomal subunit, binds 16S rRNA. Requires Zn(2+) as cofactor.

The protein resides in the cytoplasm. Functionally, one of several proteins that assist in the late maturation steps of the functional core of the 30S ribosomal subunit. Helps release RbfA from mature subunits. May play a role in the assembly of ribosomal proteins into the subunit. Circularly permuted GTPase that catalyzes slow GTP hydrolysis, GTPase activity is stimulated by the 30S ribosomal subunit. This is Small ribosomal subunit biogenesis GTPase RsgA from Xanthomonas axonopodis pv. citri (strain 306).